Reading from the N-terminus, the 231-residue chain is Probable pyridoxamine 5'-phosphate oxidase (231 aa).

20 to 23 (QYEK) contacts pyridoxal 5'-phosphate. 74-77 (RLVL) is an FMN binding site. Lys79 serves as a coordination point for pyridoxal 5'-phosphate. FMN is bound by residues 89–90 (FT), 96–97 (KK), and Gln119. Pyridoxal 5'-phosphate is bound by residues Tyr137, Arg141, and Ser145. FMN contacts are provided by residues 154–155 (QS) and Trp202. 208–210 (RLH) lines the pyridoxal 5'-phosphate pocket. Residue Arg212 participates in FMN binding.

The protein belongs to the pyridoxamine 5'-phosphate oxidase family. As to quaternary structure, homodimer. The cofactor is FMN.

It catalyses the reaction pyridoxamine 5'-phosphate + O2 + H2O = pyridoxal 5'-phosphate + H2O2 + NH4(+). The catalysed reaction is pyridoxine 5'-phosphate + O2 = pyridoxal 5'-phosphate + H2O2. It functions in the pathway cofactor metabolism; pyridoxal 5'-phosphate salvage; pyridoxal 5'-phosphate from pyridoxamine 5'-phosphate: step 1/1. Its pathway is cofactor metabolism; pyridoxal 5'-phosphate salvage; pyridoxal 5'-phosphate from pyridoxine 5'-phosphate: step 1/1. Its function is as follows. Catalyzes the oxidation of either pyridoxine 5'-phosphate (PNP) or pyridoxamine 5'-phosphate (PMP) into pyridoxal 5'-phosphate (PLP). The chain is Probable pyridoxamine 5'-phosphate oxidase from Schizosaccharomyces pombe (strain 972 / ATCC 24843) (Fission yeast).